Reading from the N-terminus, the 74-residue chain is CLAVATA3/ESR (CLE)-related protein 19 (74 aa).

An N-terminal signal peptide occupies residues 1 to 24; it reads MKIKGLMILASSLLILAFIHQSES. N-linked (GlcNAc...) asparagine glycans are attached at residues Asn34 and Asn54. Hydroxyproline occurs at positions 65 and 68. A glycan (O-linked (Ara...) hydroxyproline) is linked at Pro68.

Belongs to the CLV3/ESR signal peptide family. Post-translationally, the O-glycosylation (arabinosylation) of the hydroxyproline Pro-68 enhances binding affinity of the CLE19p peptide for its receptor. Mostly expressed in heart-shape embryos, pollen and young flower buds, and, to a lower extent, in inflorescence, leaves and roots.

The protein localises to the secreted. It localises to the extracellular space. In terms of biological role, extracellular signal peptide that regulates cell fate. Represses root apical meristem maintenance. The sequence is that of CLAVATA3/ESR (CLE)-related protein 19 from Arabidopsis thaliana (Mouse-ear cress).